The following is a 427-amino-acid chain: Cyclic 2,3-diphosphoglycerate synthetase (427 aa).

Belongs to the cyclic 2,3-diphosphoglycerate synthetase family.

The protein resides in the cytoplasm. It catalyses the reaction (2R)-2,3-bisphosphoglycerate + ATP + H(+) = cyclic (2R)-2,3-bisphosphoglycerate + ADP + phosphate. Its function is as follows. Catalyzes the formation of cyclic 2,3-diphosphoglycerate (cDPG) by formation of an intramolecular phosphoanhydride bond at the expense of ATP. This Pyrococcus abyssi (strain GE5 / Orsay) protein is Cyclic 2,3-diphosphoglycerate synthetase.